Reading from the N-terminus, the 251-residue chain is Triosephosphate isomerase (251 aa).

9-11 (NWK) contributes to the substrate binding site. The Electrophile role is filled by His-95. Glu-167 functions as the Proton acceptor in the catalytic mechanism. Substrate is bound by residues Gly-173, Ser-212, and 233–234 (GG).

This sequence belongs to the triosephosphate isomerase family. Homodimer.

Its subcellular location is the cytoplasm. It catalyses the reaction D-glyceraldehyde 3-phosphate = dihydroxyacetone phosphate. It functions in the pathway carbohydrate biosynthesis; gluconeogenesis. It participates in carbohydrate degradation; glycolysis; D-glyceraldehyde 3-phosphate from glycerone phosphate: step 1/1. Its function is as follows. Involved in the gluconeogenesis. Catalyzes stereospecifically the conversion of dihydroxyacetone phosphate (DHAP) to D-glyceraldehyde-3-phosphate (G3P). This is Triosephosphate isomerase from Pseudomonas entomophila (strain L48).